The following is a 65-amino-acid chain: Putative beta-neurotoxin RjAa7 (65 aa).

The LCN-type CS-alpha/beta domain maps to 1–64; it reads KEGYPVGRDG…VWDSSTNKCG (64 aa). 4 disulfides stabilise this stretch: Cys-11–Cys-63, Cys-15–Cys-37, Cys-22–Cys-44, and Cys-26–Cys-46.

The protein belongs to the long (4 C-C) scorpion toxin superfamily. Sodium channel inhibitor family. Beta subfamily. As to expression, expressed by the venom gland.

The protein localises to the secreted. Its function is as follows. Beta toxins bind voltage-independently at site-4 of sodium channels (Nav) and shift the voltage of activation toward more negative potentials thereby affecting sodium channel activation and promoting spontaneous and repetitive firing. The chain is Putative beta-neurotoxin RjAa7 from Rhopalurus junceus (Caribbean blue scorpion).